The following is a 199-amino-acid chain: Gamma-glutamylcyclotransferase 2-3 (199 aa).

5–10 serves as a coordination point for substrate; sequence VFGYGS. The Proton acceptor role is filled by E86.

Belongs to the gamma-glutamylcyclotransferase family. Mn(2+) is required as a cofactor.

It is found in the cytoplasm. The catalysed reaction is glutathione = L-cysteinylglycine + 5-oxo-L-proline. Functionally, converts GSH to 5-oxoproline and cysteine-glycine (Cys-Gly) dipeptide in vitro and plays a significant role in glutathione (GSH) homeostasis. Has no activity towards gamma-glutamyl-L-cysteine but possesses very low activity towards gamma-glutamyl-L-alanine. This Arabidopsis thaliana (Mouse-ear cress) protein is Gamma-glutamylcyclotransferase 2-3.